The chain runs to 128 residues: MARIAGVDLPREKRIEVSLQYIYGIGKTSAKLILERANVSPVTRTKDLTDDEVRRIRETIEQNVKVEGDLRREISLNVKRLMDLGCYRGLRHRKGLPVRGQRTHTNARTRKGPKKGLVRKAAAPAPKA.

Over residues 95-118 (GLPVRGQRTHTNARTRKGPKKGLV) the composition is skewed to basic residues. Residues 95-128 (GLPVRGQRTHTNARTRKGPKKGLVRKAAAPAPKA) are disordered.

This sequence belongs to the universal ribosomal protein uS13 family. In terms of assembly, part of the 30S ribosomal subunit. Forms a loose heterodimer with protein S19. Forms two bridges to the 50S subunit in the 70S ribosome.

In terms of biological role, located at the top of the head of the 30S subunit, it contacts several helices of the 16S rRNA. In the 70S ribosome it contacts the 23S rRNA (bridge B1a) and protein L5 of the 50S subunit (bridge B1b), connecting the 2 subunits; these bridges are implicated in subunit movement. Contacts the tRNAs in the A and P-sites. The sequence is that of Small ribosomal subunit protein uS13 from Anaeromyxobacter sp. (strain K).